A 42-amino-acid chain; its full sequence is Thymosin beta-10 (42 aa).

2 stretches are compositionally biased toward basic and acidic residues: residues 1-25 and 33-42; these read MADKPDMGEINSFDKAKLKKTETQE and ETIEQEKQAK. The tract at residues 1 to 42 is disordered; the sequence is MADKPDMGEINSFDKAKLKKTETQEKNTLPTKETIEQEKQAK. At Ala-2 the chain carries N-acetylalanine. Position 4 is an N6-acetyllysine (Lys-4). Position 12 is a phosphoserine (Ser-12). N6-acetyllysine is present on Lys-15. Thr-21, Thr-23, and Thr-34 each carry phosphothreonine. Lys-39 carries the post-translational modification N6-acetyllysine.

It belongs to the thymosin beta family.

Its subcellular location is the cytoplasm. It is found in the cytoskeleton. Plays an important role in the organization of the cytoskeleton. Binds to and sequesters actin monomers (G actin) and therefore inhibits actin polymerization. This is Thymosin beta-10 (TMSB10) from Sus scrofa (Pig).